The chain runs to 371 residues: UDP-N-acetylglucosamine--N-acetylmuramyl-(pentapeptide) pyrophosphoryl-undecaprenol N-acetylglucosamine transferase (371 aa).

Residues 10-12 (TGG), N124, R165, S197, I251, and Q296 contribute to the UDP-N-acetyl-alpha-D-glucosamine site.

Belongs to the glycosyltransferase 28 family. MurG subfamily.

The protein localises to the cell membrane. The catalysed reaction is di-trans,octa-cis-undecaprenyl diphospho-N-acetyl-alpha-D-muramoyl-L-alanyl-D-glutamyl-meso-2,6-diaminopimeloyl-D-alanyl-D-alanine + UDP-N-acetyl-alpha-D-glucosamine = di-trans,octa-cis-undecaprenyl diphospho-[N-acetyl-alpha-D-glucosaminyl-(1-&gt;4)]-N-acetyl-alpha-D-muramoyl-L-alanyl-D-glutamyl-meso-2,6-diaminopimeloyl-D-alanyl-D-alanine + UDP + H(+). It participates in cell wall biogenesis; peptidoglycan biosynthesis. Functionally, cell wall formation. Catalyzes the transfer of a GlcNAc subunit on undecaprenyl-pyrophosphoryl-MurNAc-pentapeptide (lipid intermediate I) to form undecaprenyl-pyrophosphoryl-MurNAc-(pentapeptide)GlcNAc (lipid intermediate II). The chain is UDP-N-acetylglucosamine--N-acetylmuramyl-(pentapeptide) pyrophosphoryl-undecaprenol N-acetylglucosamine transferase from Carboxydothermus hydrogenoformans (strain ATCC BAA-161 / DSM 6008 / Z-2901).